Here is a 702-residue protein sequence, read N- to C-terminus: Zinc finger CCCH domain-containing protein 62 (702 aa).

The disordered stretch occupies residues 1-77 (MAAPAADDDD…SYDDPTFDPA (77 aa)). Residues 18-54 (EEDDGEEEEGSEEEVESDDEEEEEGEGYDWSEEDDPE) show a composition bias toward acidic residues. Residues 132–166 (LEKLKVYECKAYLRMHKLRLSGNKEVLLTRIRGQI) form the SAP domain. Disordered stretches follow at residues 288-349 (EKHA…NTVQ), 405-532 (SRTS…QQQP), 546-602 (GGTS…RETH), and 634-673 (QMSQDQYHHQQNHHQNYHGRQGMNGNQYHDRQNHNQNPQR). Residues 298–325 (KTREVRIKDKENERMRRLNRNKENKSKG) are compositionally biased toward basic and acidic residues. Polar residues-rich tracts occupy residues 326 to 349 (QDNMNKKSSQAVFPQHTVTTNTVQ) and 405 to 419 (SRTSTTQLINHQAPS). The span at 430–448 (QQQQQQQPPKSIKPAPIQQ) shows a compositional bias: low complexity. 4 stretches are compositionally biased toward polar residues: residues 472–502 (SQEQRAAVSQTSAARQDFTNHQAPPSRQHGG), 522–532 (QQAVSYTQQQP), 546–565 (GGTSTSRTGFMDRQSNNWGS), and 575–591 (PFTQKAKTYQHGSNGSG). A C3H1-type zinc finger spans residues 674 to 702 (FRPWKPCFIYQQQGWCPYGENCKFMHDLR).

The sequence is that of Zinc finger CCCH domain-containing protein 62 from Oryza sativa subsp. japonica (Rice).